Consider the following 139-residue polypeptide: Acyl carrier protein 4, chloroplastic (139 aa).

A chloroplast-targeting transit peptide spans 1 to 55 (MASAAAGASICIKSASCSPLAPGRISSLRSVSLPVSRKSFPSLRSSKGSFARVSC). Residues 59 to 134 (PETVAKVCRI…DAADLIEKLM (76 aa)) enclose the Carrier domain. Ser-94 is subject to O-(pantetheine 4'-phosphoryl)serine.

Belongs to the acyl carrier protein (ACP) family. 4'-phosphopantetheine is transferred from CoA to a specific serine of apo-ACP by acpS. This modification is essential for activity because fatty acids are bound in thioester linkage to the sulfhydryl of the prosthetic group.

Its subcellular location is the plastid. It localises to the chloroplast. Its pathway is lipid metabolism; fatty acid biosynthesis. Its function is as follows. Carrier of the growing fatty acid chain in fatty acid biosynthesis. In Cuphea lanceolata (Cigar flower), this protein is Acyl carrier protein 4, chloroplastic (ACL1).